The sequence spans 342 residues: Deoxyguanosinetriphosphate triphosphohydrolase-like protein (342 aa).

Residues 75-190 (RLVHTLEVSQ…VRFADKIAYV (116 aa)) enclose the HD domain.

Belongs to the dGTPase family. Type 2 subfamily.

In Clostridium perfringens (strain SM101 / Type A), this protein is Deoxyguanosinetriphosphate triphosphohydrolase-like protein.